The primary structure comprises 322 residues: Transcription factor Atoh8 (322 aa).

Disordered regions lie at residues 77-96 (PVPASVAPAVPPGGGTDTAR), 101-144 (IRAP…EAHS), and 159-221 (PPAR…ATAA). A compositionally biased stretch (basic and acidic residues) spans 101 to 111 (IRAPEVSDARK). The segment at 231 to 244 (TRRLLANARERTRV) is basic motif; degenerate. The 53-residue stretch at 231-283 (TRRLLANARERTRVHTISAAFEALRKQVPCYSYGQKLSKLAILRIACNYILSL) folds into the bHLH domain. Residues 245–283 (HTISAAFEALRKQVPCYSYGQKLSKLAILRIACNYILSL) are helix-loop-helix motif.

Efficient DNA binding requires dimerization with another bHLH protein. Interacts with NEUROG3 and NEUROD1. Interacts with ZFPM2; mediates indirect interaction with GATA4. Forms a heterodimer with TCF3; repress transcription of TCF3 and TCF3/NEUROG3 dimer-induced transactivation of E box-dependent promoters. In terms of tissue distribution, expressed by subsets of mature neurons. Expressed in kidney (podocytes). Expression is restricted to the atria, lung mesenchyme, and vascular smooth muscle.

It localises to the nucleus. It is found in the nucleus speckle. Its subcellular location is the cytoplasm. Transcription factor that binds a palindromic (canonical) core consensus DNA sequence 5'-CANNTG- 3' known as an E-box element, possibly as a heterodimer with other bHLH proteins. Regulates endothelial cell proliferation, migration and tube-like structures formation. Modulates endothelial cell differentiation through NOS3. May be implicated in specification and differentiation of neuronal cell lineages in the brain. May participate in kidney development and may be involved in podocyte differentiation. During early embryonic development is involved in tissue-specific differentiation processes that are dependent on class II bHLH factors and namely modulates the differentiation program initiated by the pro-endocrine factor NEUROG3. During myogenesis, may play a role during the transition of myoblasts from the proliferative phase to the differentiation phase. Positively regulates HAMP transcription in two ways, firstly by acting directly on the HAMP promoter via E-boxes binding and indirectly through increased phosphorylation of SMAD protein complex. Repress NEUROG3-dependent gene activation in a gene-specific manner through at least two mechanisms; requires only either the sequestering of a general partner such as TCF3 through heterodimerization, either also requires binding of the bHLH domain to DNA via a basic motif. In Mus musculus (Mouse), this protein is Transcription factor Atoh8.